Consider the following 335-residue polypeptide: Phosphate acyltransferase (335 aa).

Belongs to the PlsX family. In terms of assembly, homodimer. Probably interacts with PlsY.

The protein resides in the cytoplasm. The enzyme catalyses a fatty acyl-[ACP] + phosphate = an acyl phosphate + holo-[ACP]. The protein operates within lipid metabolism; phospholipid metabolism. Its function is as follows. Catalyzes the reversible formation of acyl-phosphate (acyl-PO(4)) from acyl-[acyl-carrier-protein] (acyl-ACP). This enzyme utilizes acyl-ACP as fatty acyl donor, but not acyl-CoA. In Streptococcus pyogenes serotype M18 (strain MGAS8232), this protein is Phosphate acyltransferase.